We begin with the raw amino-acid sequence, 262 residues long: Small ribosomal subunit protein uS2 (262 aa).

The protein belongs to the universal ribosomal protein uS2 family.

This is Small ribosomal subunit protein uS2 from Rhodospirillum rubrum (strain ATCC 11170 / ATH 1.1.1 / DSM 467 / LMG 4362 / NCIMB 8255 / S1).